The chain runs to 904 residues: HTH-type transcriptional regulator MalT (904 aa).

ATP is bound at residue 39–46 (CPAGYGKT). Residues 832-897 (ELIRTSPLTQ…EAVQQAQQLL (66 aa)) enclose the HTH luxR-type domain. The H-T-H motif DNA-binding region spans 856 to 875 (NDQIAGELAVAATTIKTHIR).

It belongs to the MalT family. In terms of assembly, monomer in solution. Oligomerizes to an active state in the presence of the positive effectors ATP and maltotriose.

Its activity is regulated as follows. Activated by ATP and maltotriose, which are both required for DNA binding. In terms of biological role, positively regulates the transcription of the maltose regulon whose gene products are responsible for uptake and catabolism of malto-oligosaccharides. Specifically binds to the promoter region of its target genes, recognizing a short DNA motif called the MalT box. The protein is HTH-type transcriptional regulator MalT of Serratia proteamaculans (strain 568).